Consider the following 300-residue polypeptide: Transcription elongation factor A protein 2 (300 aa).

Residues 6–83 (EEIARIARRL…KSWKKLLDAS (78 aa)) enclose the TFIIS N-terminal domain. Lysine 58 is covalently cross-linked (Glycyl lysine isopeptide (Lys-Gly) (interchain with G-Cter in ubiquitin)). Phosphoserine is present on residues serine 60 and serine 101. The interval 84–131 (DAKARERRRGGSLPTSSSKEASEAQDPSRKRPELPRMPSTPRITTFPP) is disordered. A compositionally biased stretch (basic and acidic residues) spans 103–117 (EASEAQDPSRKRPEL). In terms of domain architecture, TFIIS central spans 139-255 (VRTKCREMLT…EHQMARTGGT (117 aa)). The segment at 258-298 (DLFTCGKCRKKNCTYTQVQTRSSDEPMTTFVVCNECGNRWK) adopts a TFIIS-type zinc-finger fold. Zn(2+) is bound by residues cysteine 262, cysteine 265, cysteine 290, and cysteine 293.

This sequence belongs to the TFS-II family. As to quaternary structure, interacts with the basal transcription factor GTF2B. Interacts with REXO1.

Its subcellular location is the nucleus. In terms of biological role, necessary for efficient RNA polymerase II transcription elongation past template-encoded arresting sites. The arresting sites in DNA have the property of trapping a certain fraction of elongating RNA polymerases that pass through, resulting in locked ternary complexes. Cleavage of the nascent transcript by S-II allows the resumption of elongation from the new 3'-terminus. This chain is Transcription elongation factor A protein 2 (TCEA2), found in Bos taurus (Bovine).